We begin with the raw amino-acid sequence, 383 residues long: Glutaminyl-peptide cyclotransferase-like protein (383 aa).

Residues 33-53 form a helical membrane-spanning segment; sequence VQFLPLLLLALAMGLAFYIVW. Cysteine 168 and cysteine 192 form a disulfide bridge. Aspartate 187 contacts Zn(2+). Glutamate 226 serves as the catalytic Proton acceptor. Residue glutamate 227 participates in Zn(2+) binding. The active-site Proton acceptor is the aspartate 270. Position 352 (histidine 352) interacts with Zn(2+).

The protein belongs to the glutaminyl-peptide cyclotransferase family. In terms of tissue distribution, detected in thalamus, hippocampus, brain cortex, cerebellum, kidney, lung and liver, and at low levels in heart and spleen.

The protein localises to the golgi apparatus membrane. It catalyses the reaction N-terminal L-glutaminyl-[peptide] = N-terminal 5-oxo-L-prolyl-[peptide] + NH4(+). Functionally, responsible for the biosynthesis of pyroglutamyl peptides. This chain is Glutaminyl-peptide cyclotransferase-like protein (Qpctl), found in Mus musculus (Mouse).